Reading from the N-terminus, the 194-residue chain is uncharacterized protein (194 aa).

Disordered stretches follow at residues 1 to 21 and 73 to 97; these read MPKGRRGSQNPKMSQRPAPPL and PATVPPPPPGLGPPSERPCPPPWPS. Positions 73–96 are enriched in pro residues; sequence PATVPPPPPGLGPPSERPCPPPWP.

This is an uncharacterized protein from Mus musculus (Mouse).